The following is a 465-amino-acid chain: Phosphatidate cytidylyltransferase (465 aa).

The interval 1-60 is disordered; that stretch reads MSDQPPAENADVRQRRAPESPVTERLRAPARDDARPTSDESDMEGILQDEDSDAGSKNKE. Basic and acidic residues predominate over residues 10-38; it reads ADVRQRRAPESPVTERLRAPARDDARPTS. Positions 39–53 are enriched in acidic residues; that stretch reads DESDMEGILQDEDSD. Transmembrane regions (helical) follow at residues 95–117, 121–143, 158–178, 187–207, 214–234, 239–259, 288–308, and 367–387; these read WVVR…TRGA, MFLV…LAVY, FLLT…WGIV, FLVA…FVSF, GYYM…LLIV, FIIQ…AMII, GFIG…LALY, and IALS…ASGF.

The protein belongs to the CDS family.

It is found in the membrane. The catalysed reaction is a 1,2-diacyl-sn-glycero-3-phosphate + CTP + H(+) = a CDP-1,2-diacyl-sn-glycerol + diphosphate. The protein operates within phospholipid metabolism; CDP-diacylglycerol biosynthesis; CDP-diacylglycerol from sn-glycerol 3-phosphate: step 3/3. In terms of biological role, provides CDP-diacylglycerol, an important precursor for the synthesis of phosphatidylinositol (PtdIns). The polypeptide is Phosphatidate cytidylyltransferase (cdgs-1) (Caenorhabditis elegans).